A 541-amino-acid chain; its full sequence is Serine/threonine-protein kinase akt-1 (541 aa).

Residues 15 to 118 (DVVIEGWLHK…WIHAIESISK (104 aa)) enclose the PH domain. The Protein kinase domain maps to 193-450 (FDFLKVLGKG…ALEICRADFF (258 aa)). Residues 199 to 207 (LGKGTFGKV) and Lys-222 contribute to the ATP site. Catalysis depends on Asp-316, which acts as the Proton acceptor. Residue Thr-350 is modified to Phosphothreonine. The AGC-kinase C-terminal domain maps to 451-528 (RTVDWEATYR…HNVMGSINRI (78 aa)). Ser-517 carries the post-translational modification Phosphoserine.

The protein belongs to the protein kinase superfamily. AGC Ser/Thr protein kinase family. RAC subfamily. In terms of assembly, interacts with pdk-1, sgk-1, akt-2 and daf-16. Part of a complex containing sgk-1, akt-1 and akt-2. Interacts with cmd-1 in the presence of Ca(2+). Interacts with let-92 phosphatase regulatory subunit pptr-1. The cofactor is Mg(2+). Expressed in neurons, muscle cells of the pharynx, rectal gland cells, vulva and spermatheca.

It carries out the reaction L-seryl-[protein] + ATP = O-phospho-L-seryl-[protein] + ADP + H(+). The catalysed reaction is L-threonyl-[protein] + ATP = O-phospho-L-threonyl-[protein] + ADP + H(+). Phosphorylated and activated by pdk-1. Its function is as follows. Acts downstream of PI3 kinase age-1 and kinase pdk-1 in the daf-2/insulin receptor-like transduction pathway. Phosphorylates Forkhead-related daf-16 and the longevity-promoting skn-1 transcription factors, which inhibits their entry into the nucleus and antagonizes their functions. Plays a role in maintaining the gonadal basement membrane through it's role in inhibiting daf-16 activity. Has an essential role in regulating developmental arrest at the dauer stage. Plays a role in immune function and pathogen resistance. Regulates salt chemotaxis learning. Downstream of age-1 and together with akt-2 and sgk-1, promotes cell survival during embryonic development. The protein is Serine/threonine-protein kinase akt-1 of Caenorhabditis elegans.